The sequence spans 234 residues: Glycoprotein BDLF3 (234 aa).

The first 28 residues, 1-28 (MAHARDKAGAVMAMILICETSLIWTSSG), serve as a signal peptide directing secretion. Residues 29–62 (SSTASAGNVTGTTAVTTPSPSASGPSTNQSTTLT) form a disordered region. 9 N-linked (GlcNAc...) asparagine; by host glycosylation sites follow: N36, N56, N77, N96, N101, N110, N127, N144, and N159. The tract at residues 116-138 (AGTGTSTGVTSNVTTRSSSTTSA) is disordered. The chain crosses the membrane as a helical span at residues 187-207 (LVFVGLTFLMLILIFAAGLMM).

The protein belongs to the Epstein-Barr virus BDLF3 protein family.

It localises to the membrane. This is Glycoprotein BDLF3 from Homo sapiens (Human).